The following is a 229-amino-acid chain: ATP-dependent dethiobiotin synthetase BioD (229 aa).

12 to 17 contributes to the ATP binding site; sequence GAGKTI. Threonine 16 is a Mg(2+) binding site. The active site involves lysine 38. ATP contacts are provided by residues aspartate 46, 105-108, and 165-166; these read EGVG and SE. Aspartate 46 and glutamate 105 together coordinate Mg(2+).

Belongs to the dethiobiotin synthetase family. Homodimer. The cofactor is Mg(2+).

Its subcellular location is the cytoplasm. The enzyme catalyses (7R,8S)-7,8-diammoniononanoate + CO2 + ATP = (4R,5S)-dethiobiotin + ADP + phosphate + 3 H(+). It carries out the reaction (7R,8S)-8-amino-7-(carboxyamino)nonanoate + ATP = (4R,5S)-dethiobiotin + ADP + phosphate + H(+). The protein operates within cofactor biosynthesis; biotin biosynthesis; biotin from 7,8-diaminononanoate: step 1/2. Functionally, catalyzes a mechanistically unusual reaction, the ATP-dependent insertion of CO2 between the N7 and N8 nitrogen atoms of 7,8-diaminopelargonic acid (DAPA, also called 7,8-diammoniononanoate) to form a ureido ring. This cyanobacterium does not encode bioA (which catalyzes the formation of the precursor for this reaction in the cannonical pathway), instead it encodes bioU, which replaces bioA and also performs the first half of the cannonical BioD reaction. Thus in this organism BioD has a different substrate. In Gloeobacter violaceus (strain ATCC 29082 / PCC 7421), this protein is ATP-dependent dethiobiotin synthetase BioD.